Consider the following 352-residue polypeptide: Protein Wnt-11 (352 aa).

An N-terminal signal peptide occupies residues 1–22 (MKIYFLLGTFLTFLLHTRICQG). Residues Asn-38 and Asn-88 are each glycosylated (N-linked (GlcNAc...) asparagine). 5 disulfide bridges follow: Cys-78–Cys-89, Cys-128–Cys-136, Cys-138–Cys-155, Cys-207–Cys-221, and Cys-209–Cys-216. Ser-213 is lipidated: O-palmitoleoyl serine; by PORCN. 2 positions are modified to sulfotyrosine: Tyr-273 and Tyr-280. 6 disulfides stabilise this stretch: Cys-281-Cys-312, Cys-297-Cys-307, Cys-311-Cys-351, Cys-327-Cys-342, Cys-329-Cys-339, and Cys-334-Cys-335. A glycan (N-linked (GlcNAc...) asparagine) is linked at Asn-298.

It belongs to the Wnt family. Glycosylation is required for protein secretion. In terms of processing, palmitoleoylation is required for efficient binding to frizzled receptors. Depalmitoleoylation leads to Wnt signaling pathway inhibition. In terms of tissue distribution, in embryos, expressed in the neural tube, dorsal somite, mesenchymal cells within the dorsal fin, branchial arches and heart muscle, becoming expressed throughout the myocardium by the tadpole stage (stage 45). Prior to neural crest cell migration, expressed in a domain flanking the neural crest on the medial or neural (the opposite side to wnt11b). Weakly expressed in the developing pronephros from stage 25, with expression increasing from stages 30 to 35.

The protein localises to the secreted. The protein resides in the extracellular space. It is found in the extracellular matrix. In terms of biological role, ligand for members of the frizzled family of seven transmembrane receptors. Shares much functionality with wnt11b. Signals through a non-canonical Wnt pathway to activate Jun-N-terminal kinase (JNK) to regulate gastrulation movements. Acts in a non-cell-autonomous manner to control neural crest migration, probably acting as an extracellular signal from surrounding tissue, but is not required for neural crest induction. Acts redundantly with wnt11b during pronephros induction. Regulates cardiac morphogenesis through the activation of JNK, but is not required for cardiac differentiation. Essential for dorsal fin development; required for an epithelial to mesenchymal transformation event prior to migration of cells into the fin, and ultimately for maintenance of fin structure. Mediates dorsal fin development through a non-canonical pathway mediated by Ca(2+). The protein is Protein Wnt-11 of Xenopus laevis (African clawed frog).